The chain runs to 873 residues: DNA mismatch repair protein MutS (873 aa).

Residue 601–608 participates in ATP binding; that stretch reads GPNMSGKS.

It belongs to the DNA mismatch repair MutS family.

This protein is involved in the repair of mismatches in DNA. It is possible that it carries out the mismatch recognition step. This protein has a weak ATPase activity. The sequence is that of DNA mismatch repair protein MutS from Staphylococcus epidermidis (strain ATCC 12228 / FDA PCI 1200).